The primary structure comprises 231 residues: 3-oxoadipate CoA-transferase subunit A (231 aa).

Position 25-31 (25-31) interacts with CoA; sequence GGFGTAG.

This sequence belongs to the 3-oxoacid CoA-transferase subunit A family. Heterodimer.

The enzyme catalyses 3-oxoadipate + succinyl-CoA = 3-oxoadipyl-CoA + succinate. The protein operates within aromatic compound metabolism; beta-ketoadipate pathway; acetyl-CoA and succinyl-CoA from 3-oxoadipate: step 1/2. This Pseudomonas putida (Arthrobacter siderocapsulatus) protein is 3-oxoadipate CoA-transferase subunit A (pcaI).